The sequence spans 365 residues: UDP-N-acetylglucosamine--N-acetylmuramyl-(pentapeptide) pyrophosphoryl-undecaprenol N-acetylglucosamine transferase (365 aa).

UDP-N-acetyl-alpha-D-glucosamine-binding positions include Thr19 to Gly21, Asn131, Arg170, Ser201, Ile255, Ala274 to Glu279, and Gln300.

It belongs to the glycosyltransferase 28 family. MurG subfamily.

Its subcellular location is the cell inner membrane. It catalyses the reaction di-trans,octa-cis-undecaprenyl diphospho-N-acetyl-alpha-D-muramoyl-L-alanyl-D-glutamyl-meso-2,6-diaminopimeloyl-D-alanyl-D-alanine + UDP-N-acetyl-alpha-D-glucosamine = di-trans,octa-cis-undecaprenyl diphospho-[N-acetyl-alpha-D-glucosaminyl-(1-&gt;4)]-N-acetyl-alpha-D-muramoyl-L-alanyl-D-glutamyl-meso-2,6-diaminopimeloyl-D-alanyl-D-alanine + UDP + H(+). Its pathway is cell wall biogenesis; peptidoglycan biosynthesis. Its function is as follows. Cell wall formation. Catalyzes the transfer of a GlcNAc subunit on undecaprenyl-pyrophosphoryl-MurNAc-pentapeptide (lipid intermediate I) to form undecaprenyl-pyrophosphoryl-MurNAc-(pentapeptide)GlcNAc (lipid intermediate II). The chain is UDP-N-acetylglucosamine--N-acetylmuramyl-(pentapeptide) pyrophosphoryl-undecaprenol N-acetylglucosamine transferase from Acinetobacter baumannii (strain SDF).